We begin with the raw amino-acid sequence, 181 residues long: Regulator of G-protein signaling 10 (181 aa).

Positions 1–32 (MFNRAVSRLSRKRPPSDIHDSDGSSSSSHQSL) are disordered. Over residues 23-32 (GSSSSSHQSL) the composition is skewed to low complexity. 2 positions are modified to phosphoserine: Ser24 and Ser41. The RGS domain maps to 41–156 (SLENLLEDPE…LKSDLFLKHK (116 aa)). Cys74 carries S-palmitoyl cysteine lipidation. Positions 158-181 (TEEEEEDLPDAQTAAKRASRIYNT) are disordered. The residue at position 176 (Ser176) is a Phosphoserine.

As to quaternary structure, interacts with GNAZ, GNAI1 and GNAI3. Associates specifically with the activated, GTP-bound forms of GNAZ and GNAI3.

Its subcellular location is the cytoplasm. The protein localises to the cytosol. It is found in the nucleus. Its function is as follows. Regulates G protein-coupled receptor signaling cascades, including signaling downstream of the muscarinic acetylcholine receptor CHRM2. Inhibits signal transduction by increasing the GTPase activity of G protein alpha subunits, thereby driving them into their inactive GDP-bound form. Modulates the activity of potassium channels that are activated in response to CHRM2 signaling. Activity on GNAZ is inhibited by palmitoylation of the G-protein. This chain is Regulator of G-protein signaling 10 (RGS10), found in Homo sapiens (Human).